Reading from the N-terminus, the 292-residue chain is Zinc finger protein OZF (292 aa).

10 C2H2-type zinc fingers span residues 16–38 (FACKVCGKLFSHKSNLTEHEHFH), 44–66 (FECNECGKAFSQKQYVIKHQSTH), 72–94 (FECSDCGKAFSQKENLLTHQKIH), 100–122 (FECKDCGKAFIQKSNLIRHQRTH), 128–150 (FICKECGKTFSGKSNLTEHEKIH), 156–178 (FKCNECGTAFGQKKYLIKHQNIH), 184–206 (YECNECGKAFSQRTSLIVHVRIH), 212–234 (YECNVCGKAFSQSSSLTVHVRSH), 240–262 (YGCNECGKAFSQFSTLALHLRIH), and 268–290 (YQCSECGKAFSQKSHHIRHQKIH). Glycyl lysine isopeptide (Lys-Gly) (interchain with G-Cter in SUMO2) cross-links involve residues K28, K51, and K56. Residues K157 and K169 each participate in a glycyl lysine isopeptide (Lys-Gly) (interchain with G-Cter in SUMO) cross-link. A Glycyl lysine isopeptide (Lys-Gly) (interchain with G-Cter in SUMO2) cross-link involves residue K173. Positions 212–292 (YECNVCGKAF…HIRHQKIHTH (81 aa)) are interaction with TERF2IP.

This sequence belongs to the krueppel C2H2-type zinc-finger protein family. As to quaternary structure, binds DNA. Interacts with SUMO conjugating enzyme UBC9/UBE2I. Interacts with the telomeric protein TERF2IP. In terms of tissue distribution, expressed in heart, brain, liver, lung, skeletal muscle and kidney, and at much lower level in spleen and testicle. Expressed in lactating mammary gland.

The protein localises to the nucleus. The sequence is that of Zinc finger protein OZF (Znf146) from Mus musculus (Mouse).